A 130-amino-acid polypeptide reads, in one-letter code: Protein ApaG (130 aa).

The ApaG domain occupies 3-127; the sequence is SAVTRGIEVT…FSLDVPEQRR (125 aa).

This Brucella canis (strain ATCC 23365 / NCTC 10854 / RM-666) protein is Protein ApaG.